The sequence spans 632 residues: tRNA uridine 5-carboxymethylaminomethyl modification enzyme MnmG (632 aa).

FAD is bound at residue 14 to 19; that stretch reads GAGHAG. NAD(+) is bound at residue 273–287; sequence GPRYCPSFEDKIMRF.

This sequence belongs to the MnmG family. In terms of assembly, homodimer. Heterotetramer of two MnmE and two MnmG subunits. FAD serves as cofactor.

Its subcellular location is the cytoplasm. NAD-binding protein involved in the addition of a carboxymethylaminomethyl (cmnm) group at the wobble position (U34) of certain tRNAs, forming tRNA-cmnm(5)s(2)U34. The polypeptide is tRNA uridine 5-carboxymethylaminomethyl modification enzyme MnmG (Clostridium novyi (strain NT)).